Consider the following 257-residue polypeptide: Transmembrane protein C257L (257 aa).

2 helical membrane passes run 123–143 and 163–183; these read LELLGYSPTPIIGGDFMFTAL and MMIFFLIILLCVILGIFYVLV.

It belongs to the asfivirus C257R family.

The protein resides in the host membrane. It is found in the virion. The polypeptide is Transmembrane protein C257L (African swine fever virus (isolate Warthog/Namibia/Wart80/1980) (ASFV)).